The following is a 579-amino-acid chain: Fatty-acid amide hydrolase 1 (579 aa).

The chain crosses the membrane as a helical span at residues A9 to L29. The Cytoplasmic portion of the chain corresponds to R30 to D403. K142 functions as the Charge relay system in the catalytic mechanism. Substrate-binding positions include M191, S217, and I238–S241. The Charge relay system role is filled by S217. The Acyl-ester intermediate role is filled by S241. S241 is modified (phosphoserine). Residues L404–L433 lie within the membrane without spanning it. Topologically, residues N434–S579 are cytoplasmic.

This sequence belongs to the amidase family. Homodimer.

The protein resides in the endoplasmic reticulum membrane. It localises to the golgi apparatus membrane. It carries out the reaction N-(5Z,8Z,11Z,14Z-eicosatetraenoyl)-ethanolamine + H2O = ethanolamine + (5Z,8Z,11Z,14Z)-eicosatetraenoate. The enzyme catalyses (9Z)-octadecenamide + H2O = (9Z)-octadecenoate + NH4(+). It catalyses the reaction 2-(5Z,8Z,11Z,14Z-eicosatetraenoyl)-glycerol + H2O = glycerol + (5Z,8Z,11Z,14Z)-eicosatetraenoate + H(+). The catalysed reaction is N-(9Z-hexadecenoyl) ethanolamine + H2O = (9Z)-hexadecenoate + ethanolamine. It carries out the reaction N-(9Z-octadecenoyl) ethanolamine + H2O = ethanolamine + (9Z)-octadecenoate. The enzyme catalyses N-octadecanoyl ethanolamine + H2O = octadecanoate + ethanolamine. It catalyses the reaction N-docosanoyl-ethanolamine + H2O = docosanoate + ethanolamine. The catalysed reaction is N-tetracosanoyl-taurine + H2O = tetracosanoate + taurine. It carries out the reaction N-(15Z-tetracosenoyl)-ethanolamine + H2O = (15Z)-tetracosenoate + ethanolamine. The enzyme catalyses N-(9Z-octadecenoyl)-taurine + H2O = taurine + (9Z)-octadecenoate. It catalyses the reaction N-docosanoyl-taurine + H2O = docosanoate + taurine. The catalysed reaction is N-(15Z-tetracosenoyl)-taurine + H2O = (15Z)-tetracosenoate + taurine. It carries out the reaction N-tricosanoyl-taurine + H2O = tricosanoate + taurine. The enzyme catalyses (9Z,12Z,15Z)-octadecatrienamide + H2O = (9Z,12Z,15Z)-octadecatrienoate + NH4(+). It catalyses the reaction (5Z,8Z,11Z,14Z)-eicosatetraenamide + H2O = (5Z,8Z,11Z,14Z)-eicosatetraenoate + NH4(+). The catalysed reaction is (6Z)-octadecenamide + H2O = (6Z)-octadecenoate + NH4(+). It carries out the reaction (15Z)-tetracosenamide + H2O = (15Z)-tetracosenoate + NH4(+). The enzyme catalyses (8Z,11Z,14Z)-eicosatrienamide + H2O = (8Z,11Z,14Z)-eicosatrienoate + NH4(+). It catalyses the reaction (11Z,14Z,17Z)-eicosatrienamide + H2O = (11Z,14Z,17Z)-eicosatrienoate + NH4(+). The catalysed reaction is (11Z,14Z)-eicosadienamide + H2O = (11Z,14Z)-eicosadienoate + NH4(+). It carries out the reaction (9Z,12Z)-octadecadienamide + H2O = (9Z,12Z)-octadecadienoate + NH4(+). The enzyme catalyses tetradecamide + H2O = tetradecanoate + NH4(+). It catalyses the reaction 1-O-methyl-(5Z,8Z,11Z,14Z)-eicosatetraenoate + H2O = methanol + (5Z,8Z,11Z,14Z)-eicosatetraenoate + H(+). The catalysed reaction is (11Z)-eicosenamide + H2O = (11Z)-eicosenoate + NH4(+). It carries out the reaction (9Z)-octadecenoate + glycine = N-(9Z-octadecenoyl)glycine + H2O. The enzyme catalyses N-(5Z,8Z,11Z,14Z)-eicosatetraenoyl-glycine + H2O = (5Z,8Z,11Z,14Z)-eicosatetraenoate + glycine. It catalyses the reaction N-(5Z,8Z,11Z,14Z-eicosatetraenoyl)-L-serine + H2O = (5Z,8Z,11Z,14Z)-eicosatetraenoate + L-serine. With respect to regulation, inhibited the trifluoromethyl compound PF-3845. Catalyzes the hydrolysis of endogenous amidated lipids like the endocannabinoid anandamide (N-(5Z,8Z,11Z,14Z-eicosatetraenoyl)-ethanolamine), as well as other fatty amides such as the taurine-conjugated fatty acids (a structural class of central nervous system (CNS) metabolites), to their corresponding fatty acids, thereby regulating the signaling functions of these molecules. FAAH cooperates with PM20D1 in the hydrolysis of amino acid-conjugated fatty acids such as N-fatty acyl glycine and N-fatty acyl-L-serine, thereby acting as a physiological regulator of specific subsets of intracellular, but not of extracellular, N-fatty acyl amino acids. It can also catalyze the hydrolysis of the endocannabinoid 2-arachidonoylglycerol (2-(5Z,8Z,11Z,14Z-eicosatetraenoyl)-glycerol). This Mus musculus (Mouse) protein is Fatty-acid amide hydrolase 1 (Faah).